We begin with the raw amino-acid sequence, 887 residues long: Cadherin-1 (887 aa).

Positions 1 to 26 (MGRRWGSPALQRFPVLVLLLLLQVCG) are cleaved as a signal peptide. A propeptide spanning residues 27 to 160 (RRCDEAAPCQ…DPGFLRRQKR (134 aa)) is cleaved from the precursor. Cadherin domains follow at residues 161–268 (DWVI…KPVF), 269–381 (IKEV…IPIF), 382–493 (NPTM…PPVF), 494–599 (VPPI…DNGP), and 600–704 (TPEP…RRSY). The Extracellular segment spans residues 161–714 (DWVIPPISCL…IVGGLGVPAI (554 aa)). Asp-263 contacts Ca(2+). A glycan (N-linked (GlcNAc...) asparagine) is linked at Asn-291. Residue Asp-294 coordinates Ca(2+). Asn-346 carries N-linked (GlcNAc...) asparagine glycosylation. Residues Asn-564 and Asn-643 are each glycosylated (N-linked (GlcNAc...) asparagine). A helical membrane pass occupies residues 715–735 (LGILGGILALLILLLLLLLFA). Over 736–887 (RRRKVEKEPL…ELYGGGEDDE (152 aa)) the chain is Cytoplasmic. Residues 745–770 (LLPPEDDMRDNVYNYDEEGGGEEDQD) are disordered. Residues 759 to 770 (YDEEGGGEEDQD) show a composition bias toward acidic residues.

As to quaternary structure, homodimer. Interacts with CTNNA2. As to expression, expressed in the liver.

It is found in the cell junction. It localises to the adherens junction. Its subcellular location is the cell membrane. The protein resides in the endosome. The protein localises to the golgi apparatus. It is found in the trans-Golgi network. It localises to the cytoplasm. Its subcellular location is the desmosome. Cadherins are calcium-dependent cell adhesion proteins. They preferentially interact with themselves in a homophilic manner in connecting cells; cadherins may thus contribute to the sorting of heterogeneous cell types. Promotes organization of radial actin fiber structure and cellular response to contractile forces, via anchoring of radial actin fibers to CDH1 junction complexes at the cell membrane. E-cadherin is a ligand for integrin alpha-E/beta-7. The polypeptide is Cadherin-1 (CDH1) (Gallus gallus (Chicken)).